The sequence spans 213 residues: Protein-L-isoaspartate O-methyltransferase (213 aa).

Ser-62 is a catalytic residue.

It belongs to the methyltransferase superfamily. L-isoaspartyl/D-aspartyl protein methyltransferase family.

It localises to the cytoplasm. It carries out the reaction [protein]-L-isoaspartate + S-adenosyl-L-methionine = [protein]-L-isoaspartate alpha-methyl ester + S-adenosyl-L-homocysteine. In terms of biological role, catalyzes the methyl esterification of L-isoaspartyl residues in peptides and proteins that result from spontaneous decomposition of normal L-aspartyl and L-asparaginyl residues. It plays a role in the repair and/or degradation of damaged proteins. This Desulfovibrio desulfuricans (strain ATCC 27774 / DSM 6949 / MB) protein is Protein-L-isoaspartate O-methyltransferase.